Consider the following 211-residue polypeptide: Ribosomal RNA small subunit methyltransferase G (211 aa).

S-adenosyl-L-methionine contacts are provided by residues G74, L79, 125–126, and R140; that span reads AE.

Belongs to the methyltransferase superfamily. RNA methyltransferase RsmG family.

It localises to the cytoplasm. Functionally, specifically methylates the N7 position of guanine in position 518 of 16S rRNA. The chain is Ribosomal RNA small subunit methyltransferase G from Clavibacter sepedonicus (Clavibacter michiganensis subsp. sepedonicus).